Reading from the N-terminus, the 667-residue chain is MDVLANPGPLKDIVLYDQEKHVSSAVWDGQERGALRCHEHTSKLGEWKLKPKQIELVERAGFGFLRRIPAISLDNPLISALVERWRRETNTFHFTVGEMTVTLEDIALLLGLGIDGKPVIGLTYTTCSAVCERYLGKSPASNSASGGMVKLSWLKDNFSECPDDASFEEVERRTRAYLLYLVGSTIFSTTTGNKVPVMYLPLFEDFDDAGTFAWGAAALAFLYRALGNASVKSQSTICGCLTLLQCWSYYHLNIGRPKLNREPIHDQFPFVLKWKGKQNGPTANRDVVFYRKALDVMKPTDVVWLPYENMNGGDMSDRMRKSLLLGRSKTMLISFDKAERHLPDRCRKQFDLFQDIPADVQRWVRKSRGVDGGVDLSNKMESELSEWEMRWENIVPDDVQGVDEADYMRWYLGITRKIVGRPISLSSEFQRTISNVRDILELAENFQIHDLDLERGNMISRIIGLAQDCLRDQVGVTATPETQQQIELGKRMRGKERVRRKGMGKRRKGIDPMEDYGGSEDESQFGPLVEVGQMHLPLSHTNSVYDGTHMYDAVTKVDDMELCDTIPQLPETQDIHKIEGSLLDDTDKFVEESKLQEEFDGEEPTESYDVKKEDKESKVEDDDAAKGFSDVSGEENANREEEDETEMGESVAESSSLDRRGENTVVA.

An N-acetylmethionine modification is found at methionine 1. Over residues 492–508 the composition is skewed to basic residues; the sequence is MRGKERVRRKGMGKRRK. 2 disordered regions span residues 492-523 and 594-667; these read MRGKERVRRKGMGKRRKGIDPMEDYGGSEDES and KLQE…TVVA. Acidic residues predominate over residues 512 to 523; it reads PMEDYGGSEDES. Basic and acidic residues-rich tracts occupy residues 608–618 and 656–667; these read YDVKKEDKESK and SLDRRGENTVVA.

In terms of tissue distribution, expressed in root tips, the shoot apical meristem (SAM), leaves, mature flowers and embryos.

Its subcellular location is the nucleus. Its function is as follows. Maybe required to maintain cell division activity in meristematic cells. This is Protein MAIN-LIKE 2 from Arabidopsis thaliana (Mouse-ear cress).